The primary structure comprises 208 residues: Thymidylate kinase (208 aa).

Residue 10–17 participates in ATP binding; the sequence is GGEGVGKS.

The protein belongs to the thymidylate kinase family.

The catalysed reaction is dTMP + ATP = dTDP + ADP. Its function is as follows. Phosphorylation of dTMP to form dTDP in both de novo and salvage pathways of dTTP synthesis. In Rhizorhabdus wittichii (strain DSM 6014 / CCUG 31198 / JCM 15750 / NBRC 105917 / EY 4224 / RW1) (Sphingomonas wittichii), this protein is Thymidylate kinase.